The primary structure comprises 482 residues: Putative metallophosphoesterase F40B5.2 (482 aa).

Transmembrane regions (helical) follow at residues 15–35 (MNLK…SIAI), 129–149 (ALMM…YIFL), 156–176 (IAIT…FLLI), and 205–225 (CYHI…GLYT). Positions 256, 258, 288, 319, 421, and 423 each coordinate a divalent metal cation.

It belongs to the metallophosphoesterase superfamily. LOC643853 family.

Its subcellular location is the membrane. The chain is Putative metallophosphoesterase F40B5.2 from Caenorhabditis elegans.